The following is a 329-amino-acid chain: Prostaglandin reductase 1 (329 aa).

A Phosphothreonine modification is found at Thr-18. Residue Ser-20 is modified to Phosphoserine. Residues 152-155 (GAVG), Lys-178, Tyr-193, Asn-217, 239-245 (CGAISVY), 270-272 (FVV), and Asn-321 each bind NADP(+). Lys-178 bears the N6-(2-hydroxyisobutyryl)lysine; alternate mark. Lys-178 bears the N6-acetyllysine; alternate mark.

It belongs to the NADP-dependent oxidoreductase L4BD family. In terms of assembly, monomer or homodimer.

It is found in the cytoplasm. The catalysed reaction is 13,14-dihydro-15-oxo-prostaglandin E1 + NADP(+) = 15-oxoprostaglandin E1 + NADPH + H(+). The enzyme catalyses 13,14-dihydro-15-oxo-prostaglandin E2 + NADP(+) = 15-oxoprostaglandin E2 + NADPH + H(+). It catalyses the reaction 13,14-dihydro-15-oxo-prostaglandin F1alpha + NADP(+) = 15-oxoprostaglandin F1alpha + NADPH + H(+). It carries out the reaction 13,14-dihydro-15-oxo-PGF2alpha + NADP(+) = 15-oxoprostaglandin F2alpha + NADPH + H(+). The catalysed reaction is leukotriene B4 + NADP(+) = 12-oxo-leukotriene B4 + NADPH + H(+). The enzyme catalyses 20-hydroxy-leukotriene B4 + NADP(+) = 12-oxo-20-hydroxy-leukotriene B4 + NADPH + H(+). It catalyses the reaction 6-trans-leukotriene B4 + NADP(+) = 12-oxo-(5S)-hydroxy-(6E,8E,10E,14Z)-eicosatetraenoate + NADPH + H(+). It carries out the reaction (5S,12S)-dihydroxy-(6E,10E,12E,14Z)-eicosatetraenoate + NADP(+) = 12-oxo-(5S)-hydroxy-(6E,8E,10E,14Z)-eicosatetraenoate + NADPH + H(+). The catalysed reaction is an n-alkanal + NADP(+) = an alk-2-enal + NADPH + H(+). The enzyme catalyses hexanal + NADP(+) = (E)-hex-2-enal + NADPH + H(+). It catalyses the reaction octanal + NADP(+) = (2E)-octenal + NADPH + H(+). It carries out the reaction decanal + NADP(+) = (2E)-decenal + NADPH + H(+). The catalysed reaction is dodecanal + NADP(+) = (2E)-dodecenal + NADPH + H(+). The enzyme catalyses 4-hydroxynonanal + NADP(+) = (E)-4-hydroxynon-2-enal + NADPH + H(+). It catalyses the reaction pentan-2-one + NADP(+) = (E)-pent-3-en-2-one + NADPH + H(+). It carries out the reaction nonan-2-one + NADP(+) = (3E)-nonen-2-one + NADPH + H(+). In terms of biological role, NAD(P)H-dependent oxidoreductase involved in metabolic inactivation of pro- and anti-inflammatory eicosanoids: prostaglandins (PG), leukotrienes (LT) and lipoxins (LX). Catalyzes with high efficiency the reduction of the 13,14 double bond of 15-oxoPGs, including 15-oxo-PGE1, 15-oxo-PGE2, 15-oxo-PGF1-alpha and 15-oxo-PGF2-alpha. Catalyzes with lower efficiency the oxidation of the hydroxyl group at C12 of LTB4 and its derivatives, converting them into biologically less active 12-oxo-LTB4 metabolites. Reduces 15-oxo-LXA4 to 13,14 dihydro-15-oxo-LXA4, enhancing neutrophil recruitment at the inflammatory site. Plays a role in metabolic detoxification of alkenals and ketones. Reduces alpha,beta-unsaturated alkenals and ketones, particularly those with medium-chain length, showing highest affinity toward (2E)-decenal and (3E)-3-nonen-2-one. May inactivate 4-hydroxy-2-nonenal, a cytotoxic lipid constituent of oxidized low-density lipoprotein particles. The chain is Prostaglandin reductase 1 (PTGR1) from Bos taurus (Bovine).